A 294-amino-acid polypeptide reads, in one-letter code: Indole-3-glycerol phosphate synthase (294 aa).

Belongs to the TrpC family.

The enzyme catalyses 1-(2-carboxyphenylamino)-1-deoxy-D-ribulose 5-phosphate + H(+) = (1S,2R)-1-C-(indol-3-yl)glycerol 3-phosphate + CO2 + H2O. It functions in the pathway amino-acid biosynthesis; L-tryptophan biosynthesis; L-tryptophan from chorismate: step 4/5. This chain is Indole-3-glycerol phosphate synthase, found in Synechococcus sp. (strain CC9902).